The chain runs to 238 residues: Ribonuclease PH (238 aa).

Phosphate contacts are provided by residues arginine 86 and 124–126 (GTR).

Belongs to the RNase PH family. Homohexameric ring arranged as a trimer of dimers.

It catalyses the reaction tRNA(n+1) + phosphate = tRNA(n) + a ribonucleoside 5'-diphosphate. Phosphorolytic 3'-5' exoribonuclease that plays an important role in tRNA 3'-end maturation. Removes nucleotide residues following the 3'-CCA terminus of tRNAs; can also add nucleotides to the ends of RNA molecules by using nucleoside diphosphates as substrates, but this may not be physiologically important. Probably plays a role in initiation of 16S rRNA degradation (leading to ribosome degradation) during starvation. This Alkalilimnicola ehrlichii (strain ATCC BAA-1101 / DSM 17681 / MLHE-1) protein is Ribonuclease PH.